A 90-amino-acid polypeptide reads, in one-letter code: UPF0335 protein Smed_2680 (90 aa).

The protein belongs to the UPF0335 family.

The sequence is that of UPF0335 protein Smed_2680 from Sinorhizobium medicae (strain WSM419) (Ensifer medicae).